The following is a 328-amino-acid chain: GTP cyclohydrolase MptA (328 aa).

The protein belongs to the GTP cyclohydrolase IV family. Homodimer. It depends on Fe(2+) as a cofactor.

The catalysed reaction is GTP + H2O = 7,8-dihydroneopterin 2',3'-cyclic phosphate + formate + diphosphate + H(+). It functions in the pathway cofactor biosynthesis; 5,6,7,8-tetrahydromethanopterin biosynthesis. In terms of biological role, converts GTP to 7,8-dihydro-D-neopterin 2',3'-cyclic phosphate, the first intermediate in the biosynthesis of coenzyme methanopterin. In Methanospirillum hungatei JF-1 (strain ATCC 27890 / DSM 864 / NBRC 100397 / JF-1), this protein is GTP cyclohydrolase MptA.